A 314-amino-acid polypeptide reads, in one-letter code: uncharacterized protein (314 aa).

Residues 1–71 (MAGNSQRRGA…QRAGRKADET (71 aa)) are disordered. Residues G266, I286, and L295 each coordinate S-adenosyl-L-methionine.

Belongs to the class IV-like SAM-binding methyltransferase superfamily. RNA methyltransferase TrmH family.

This is an uncharacterized protein from Mycolicibacterium smegmatis (strain ATCC 700084 / mc(2)155) (Mycobacterium smegmatis).